The sequence spans 164 residues: Low molecular weight protein-tyrosine-phosphatase (164 aa).

The active-site Nucleophile is Cys-9. Arg-15 is an active-site residue. The active-site Proton donor is the Asp-128.

This sequence belongs to the low molecular weight phosphotyrosine protein phosphatase family.

The catalysed reaction is O-phospho-L-tyrosyl-[protein] + H2O = L-tyrosyl-[protein] + phosphate. Its function is as follows. Acts on tyrosine phosphorylated proteins, low-MW aryl phosphates and natural and synthetic acyl phosphates. May be involved in the regulation of sulfur amino acid metabolism. The chain is Low molecular weight protein-tyrosine-phosphatase (ptpA) from Streptomyces coelicolor (strain ATCC BAA-471 / A3(2) / M145).